The sequence spans 268 residues: Protein limb expression 1 homolog (268 aa).

The protein belongs to the LIX1 family. Interacts with ft (via intracellular domain) and ds (via intracellular domain).

It is found in the apical cell membrane. Its subcellular location is the cytoplasm. In terms of biological role, component of the Fat (ft) signaling pathway that functions in normal development of various organs such as the wing and leg. In developing imaginal disks, involved in regulating both the protein levels and apical localization of ft and ds. Involved in establishing planar cell polarity (PCP) along the anterior-posterior axis of the wing (the early Fz signaling event), probably by acting upstream of ds and ft to regulate Fz activity. The chain is Protein limb expression 1 homolog from Drosophila melanogaster (Fruit fly).